A 152-amino-acid polypeptide reads, in one-letter code: Large ribosomal subunit protein uL13 (152 aa).

It belongs to the universal ribosomal protein uL13 family. In terms of assembly, part of the 50S ribosomal subunit.

Its function is as follows. This protein is one of the early assembly proteins of the 50S ribosomal subunit, although it is not seen to bind rRNA by itself. It is important during the early stages of 50S assembly. The polypeptide is Large ribosomal subunit protein uL13 (Wolbachia pipientis wMel).